A 183-amino-acid polypeptide reads, in one-letter code: Large ribosomal subunit protein uL6 (183 aa).

Belongs to the universal ribosomal protein uL6 family. In terms of assembly, part of the 50S ribosomal subunit.

This protein binds to the 23S rRNA, and is important in its secondary structure. It is located near the subunit interface in the base of the L7/L12 stalk, and near the tRNA binding site of the peptidyltransferase center. The chain is Large ribosomal subunit protein uL6 from Ruminiclostridium cellulolyticum (strain ATCC 35319 / DSM 5812 / JCM 6584 / H10) (Clostridium cellulolyticum).